We begin with the raw amino-acid sequence, 1071 residues long: ATP-dependent helicase/deoxyribonuclease subunit B (1071 aa).

This sequence belongs to the helicase family. AddB/RexB type 2 subfamily. Heterodimer of AddA and RexB. The cofactor is Mg(2+).

Its function is as follows. The heterodimer acts as both an ATP-dependent DNA helicase and an ATP-dependent, dual-direction single-stranded exonuclease. Recognizes the chi site generating a DNA molecule suitable for the initiation of homologous recombination. This subunit has 5' -&gt; 3' nuclease activity but not helicase activity. This is ATP-dependent helicase/deoxyribonuclease subunit B from Streptococcus pyogenes serotype M28 (strain MGAS6180).